Consider the following 155-residue polypeptide: Small ribosomal subunit protein uS7 (155 aa).

This sequence belongs to the universal ribosomal protein uS7 family. As to quaternary structure, part of the 30S ribosomal subunit. Contacts proteins S9 and S11.

One of the primary rRNA binding proteins, it binds directly to 16S rRNA where it nucleates assembly of the head domain of the 30S subunit. Is located at the subunit interface close to the decoding center, probably blocks exit of the E-site tRNA. The protein is Small ribosomal subunit protein uS7 of Halorhodospira halophila (strain DSM 244 / SL1) (Ectothiorhodospira halophila (strain DSM 244 / SL1)).